Here is a 351-residue protein sequence, read N- to C-terminus: Dual-specificity RNA methyltransferase RlmN (351 aa).

The active-site Proton acceptor is Glu-90. In terms of domain architecture, Radical SAM core spans 96 to 330 (EKDHYTACLS…ATLRKSKGSD (235 aa)). Cys-103 and Cys-335 are joined by a disulfide. [4Fe-4S] cluster contacts are provided by Cys-110, Cys-114, and Cys-117. S-adenosyl-L-methionine contacts are provided by residues 162–163 (GE), Ser-194, 216–218 (SLH), and Asn-292. Cys-335 functions as the S-methylcysteine intermediate in the catalytic mechanism.

This sequence belongs to the radical SAM superfamily. RlmN family. The cofactor is [4Fe-4S] cluster.

Its subcellular location is the cytoplasm. The enzyme catalyses adenosine(2503) in 23S rRNA + 2 reduced [2Fe-2S]-[ferredoxin] + 2 S-adenosyl-L-methionine = 2-methyladenosine(2503) in 23S rRNA + 5'-deoxyadenosine + L-methionine + 2 oxidized [2Fe-2S]-[ferredoxin] + S-adenosyl-L-homocysteine. The catalysed reaction is adenosine(37) in tRNA + 2 reduced [2Fe-2S]-[ferredoxin] + 2 S-adenosyl-L-methionine = 2-methyladenosine(37) in tRNA + 5'-deoxyadenosine + L-methionine + 2 oxidized [2Fe-2S]-[ferredoxin] + S-adenosyl-L-homocysteine. In terms of biological role, specifically methylates position 2 of adenine 2503 in 23S rRNA and position 2 of adenine 37 in tRNAs. m2A2503 modification seems to play a crucial role in the proofreading step occurring at the peptidyl transferase center and thus would serve to optimize ribosomal fidelity. In Solidesulfovibrio magneticus (strain ATCC 700980 / DSM 13731 / RS-1) (Desulfovibrio magneticus), this protein is Dual-specificity RNA methyltransferase RlmN.